The sequence spans 372 residues: Spermidine/putrescine import ATP-binding protein PotA (372 aa).

Positions 11-241 (IELRSITKSY…PANLFVARFI (231 aa)) constitute an ABC transporter domain. 43–50 (GPSGCGKT) provides a ligand contact to ATP.

Belongs to the ABC transporter superfamily. Spermidine/putrescine importer (TC 3.A.1.11.1) family. As to quaternary structure, the complex is composed of two ATP-binding proteins (PotA), two transmembrane proteins (PotB and PotC) and a solute-binding protein (PotD).

It localises to the cell inner membrane. The enzyme catalyses ATP + H2O + polyamine-[polyamine-binding protein]Side 1 = ADP + phosphate + polyamineSide 2 + [polyamine-binding protein]Side 1.. In terms of biological role, part of the ABC transporter complex PotABCD involved in spermidine/putrescine import. Responsible for energy coupling to the transport system. The polypeptide is Spermidine/putrescine import ATP-binding protein PotA (Aggregatibacter actinomycetemcomitans (Actinobacillus actinomycetemcomitans)).